Consider the following 239-residue polypeptide: Purine nucleoside phosphorylase DeoD-type (239 aa).

Residue histidine 5 participates in a purine D-ribonucleoside binding. Phosphate is bound by residues glycine 21 and arginine 25. Residue lysine 27 is modified to N6-acetyllysine. Phosphate is bound by residues arginine 44 and 88–91 (RVGS). A purine D-ribonucleoside is bound by residues 180–182 (EME) and 204–205 (SD). Aspartate 205 (proton donor) is an active-site residue.

Belongs to the PNP/UDP phosphorylase family. In terms of assembly, homohexamer; trimer of homodimers.

It carries out the reaction a purine D-ribonucleoside + phosphate = a purine nucleobase + alpha-D-ribose 1-phosphate. The enzyme catalyses a purine 2'-deoxy-D-ribonucleoside + phosphate = a purine nucleobase + 2-deoxy-alpha-D-ribose 1-phosphate. In terms of biological role, catalyzes the reversible phosphorolytic breakdown of the N-glycosidic bond in the beta-(deoxy)ribonucleoside molecules, with the formation of the corresponding free purine bases and pentose-1-phosphate. The protein is Purine nucleoside phosphorylase DeoD-type of Shigella dysenteriae serotype 1 (strain Sd197).